Consider the following 383-residue polypeptide: Alanine racemase (383 aa).

Lysine 50 functions as the Proton acceptor; specific for D-alanine in the catalytic mechanism. Lysine 50 carries the N6-(pyridoxal phosphate)lysine modification. Arginine 151 serves as a coordination point for substrate. The active-site Proton acceptor; specific for L-alanine is the tyrosine 279. Methionine 327 is a substrate binding site.

It belongs to the alanine racemase family. Requires pyridoxal 5'-phosphate as cofactor.

The catalysed reaction is L-alanine = D-alanine. It participates in amino-acid biosynthesis; D-alanine biosynthesis; D-alanine from L-alanine: step 1/1. Its function is as follows. Catalyzes the interconversion of L-alanine and D-alanine. May also act on other amino acids. This is Alanine racemase (alr) from Chlorobaculum tepidum (strain ATCC 49652 / DSM 12025 / NBRC 103806 / TLS) (Chlorobium tepidum).